A 405-amino-acid polypeptide reads, in one-letter code: Glyceraldehyde-3-phosphate dehydrogenase A, chloroplastic (405 aa).

A chloroplast-targeting transit peptide spans 1–68; it reads MASATFSVAK…GHKKSLVVEA (68 aa). NADP(+) is bound by residues 80 to 81, aspartate 104, and arginine 149; that span reads RI. Residues 221-223, threonine 252, arginine 267, 280-281, and arginine 303 each bind D-glyceraldehyde 3-phosphate; these read SCT and TG. Cysteine 222 acts as the Nucleophile in catalysis. An NADP(+)-binding site is contributed by asparagine 385.

It belongs to the glyceraldehyde-3-phosphate dehydrogenase family. In terms of assembly, tetramer of either four A chains (GAPDH 2) or two A and two B chains (GAPDH 1).

Its subcellular location is the plastid. The protein resides in the chloroplast. It catalyses the reaction D-glyceraldehyde 3-phosphate + phosphate + NADP(+) = (2R)-3-phospho-glyceroyl phosphate + NADPH + H(+). The protein operates within carbohydrate biosynthesis; Calvin cycle. This is Glyceraldehyde-3-phosphate dehydrogenase A, chloroplastic (GAPA) from Pisum sativum (Garden pea).